A 393-amino-acid polypeptide reads, in one-letter code: Formate-dependent phosphoribosylglycinamide formyltransferase (393 aa).

Residues 22–23 (EL) and Glu-82 each bind N(1)-(5-phospho-beta-D-ribosyl)glycinamide. ATP is bound by residues Arg-114, Lys-155, 160–165 (SSGKGQ), 195–198 (EGFI), and Glu-203. Residues 119–308 (RLAAEELGLP…EFALHARAIL (190 aa)) enclose the ATP-grasp domain. Mg(2+) is bound by residues Glu-267 and Glu-279. N(1)-(5-phospho-beta-D-ribosyl)glycinamide is bound by residues Asp-286, Lys-356, and 363 to 364 (RR).

The protein belongs to the PurK/PurT family. Homodimer.

It catalyses the reaction N(1)-(5-phospho-beta-D-ribosyl)glycinamide + formate + ATP = N(2)-formyl-N(1)-(5-phospho-beta-D-ribosyl)glycinamide + ADP + phosphate + H(+). The protein operates within purine metabolism; IMP biosynthesis via de novo pathway; N(2)-formyl-N(1)-(5-phospho-D-ribosyl)glycinamide from N(1)-(5-phospho-D-ribosyl)glycinamide (formate route): step 1/1. In terms of biological role, involved in the de novo purine biosynthesis. Catalyzes the transfer of formate to 5-phospho-ribosyl-glycinamide (GAR), producing 5-phospho-ribosyl-N-formylglycinamide (FGAR). Formate is provided by PurU via hydrolysis of 10-formyl-tetrahydrofolate. This Pseudomonas aeruginosa (strain LESB58) protein is Formate-dependent phosphoribosylglycinamide formyltransferase.